The primary structure comprises 30 residues: Fibrinogen (30 aa).

As to quaternary structure, homodimer. Secreted into the hemolymph.

The protein localises to the secreted. It localises to the extracellular space. In terms of biological role, clotting protein. The chain is Fibrinogen from Panulirus interruptus (California spiny lobster).